The chain runs to 225 residues: 2-C-methyl-D-erythritol 4-phosphate cytidylyltransferase (225 aa).

Belongs to the IspD/TarI cytidylyltransferase family. IspD subfamily.

It carries out the reaction 2-C-methyl-D-erythritol 4-phosphate + CTP + H(+) = 4-CDP-2-C-methyl-D-erythritol + diphosphate. It participates in isoprenoid biosynthesis; isopentenyl diphosphate biosynthesis via DXP pathway; isopentenyl diphosphate from 1-deoxy-D-xylulose 5-phosphate: step 2/6. Functionally, catalyzes the formation of 4-diphosphocytidyl-2-C-methyl-D-erythritol from CTP and 2-C-methyl-D-erythritol 4-phosphate (MEP). The chain is 2-C-methyl-D-erythritol 4-phosphate cytidylyltransferase from Cereibacter sphaeroides (strain KD131 / KCTC 12085) (Rhodobacter sphaeroides).